A 92-amino-acid polypeptide reads, in one-letter code: Small ribosomal subunit protein uS19 (92 aa).

This sequence belongs to the universal ribosomal protein uS19 family.

Functionally, protein S19 forms a complex with S13 that binds strongly to the 16S ribosomal RNA. The protein is Small ribosomal subunit protein uS19 of Corynebacterium jeikeium (strain K411).